The sequence spans 348 residues: Flagellar P-ring protein (348 aa).

Residues 1–16 form the signal peptide; the sequence is MRIFLLCLALSLSVFA.

It belongs to the FlgI family. The basal body constitutes a major portion of the flagellar organelle and consists of four rings (L,P,S, and M) mounted on a central rod.

It is found in the periplasm. The protein resides in the bacterial flagellum basal body. In terms of biological role, assembles around the rod to form the L-ring and probably protects the motor/basal body from shearing forces during rotation. This chain is Flagellar P-ring protein, found in Campylobacter lari (strain RM2100 / D67 / ATCC BAA-1060).